Reading from the N-terminus, the 533-residue chain is Beta-1,4 N-acetylgalactosaminyltransferase 1 (533 aa).

The Cytoplasmic portion of the chain corresponds to 1–7 (MRLDRRA). A helical; Signal-anchor for type II membrane protein membrane pass occupies residues 8–25 (LYALVLLLACASLGLLYS). The Lumenal portion of the chain corresponds to 26 to 533 (STRNAPSLPN…KHRLQCMTAE (508 aa)). 3 N-linked (GlcNAc...) asparagine glycosylation sites follow: Asn-79, Asn-179, and Asn-274. Cys-429 and Cys-476 are oxidised to a cystine.

It belongs to the glycosyltransferase 2 family. As to quaternary structure, homodimer; disulfide-linked. As to expression, most abundant in brain, liver, lung, spleen and testis.

Its subcellular location is the golgi apparatus membrane. The enzyme catalyses a ganglioside GM3 (d18:1(4E)) + UDP-N-acetyl-alpha-D-galactosamine = a ganglioside GM2 (d18:1(4E)) + UDP + H(+). The catalysed reaction is a ganglioside GD3 (d18:1(4E)) + UDP-N-acetyl-alpha-D-galactosamine = a ganglioside GD2 (d18:1(4E)) + UDP + H(+). It carries out the reaction a ganglioside GM3 + UDP-N-acetyl-alpha-D-galactosamine = a ganglioside GM2 + UDP + H(+). It catalyses the reaction a ganglioside GD3 + UDP-N-acetyl-alpha-D-galactosamine = a ganglioside GD2 + UDP + H(+). The enzyme catalyses a ganglioside GD1a + UDP-N-acetyl-alpha-D-galactosamine = a ganglioside GalNAc-GD1a + UDP + H(+). The catalysed reaction is a ganglioside GT3 (d18:1(4E)) + UDP-N-acetyl-alpha-D-galactosamine = a ganglioside GT2 (d18:1(4E)) + UDP + H(+). It carries out the reaction a beta-D-Gal-(1-&gt;4)-beta-D-Glc-(1&lt;-&gt;1)-Cer(d18:1(4E)) + UDP-N-acetyl-alpha-D-galactosamine = a ganglioside GA2 (d18:1(4E)) + UDP + H(+). It catalyses the reaction a neolactoside IV(3)-alpha-NeuGc-nLc4Cer + UDP-N-acetyl-alpha-D-galactosamine = a neolactoside IV(4)-beta-GalNAc-IV(3)-alpha-NeuGc-nLc4Cer + UDP + H(+). Its pathway is sphingolipid metabolism. Its function is as follows. Involved in the biosynthesis of gangliosides GM2, GD2 and GA2. Involved in the biosynthesis of gangliosides GM2, GD2, GT2 and GA2 from GM3, GD3, GT3 and GA3, respectively. The protein is Beta-1,4 N-acetylgalactosaminyltransferase 1 of Mus musculus (Mouse).